A 751-amino-acid chain; its full sequence is Cytosolic neutral trehalase (751 aa).

Positions 1-15 (MDDSALPSNTSNGIN) are enriched in polar residues. Disordered regions lie at residues 1–42 (MDDS…NPES) and 64–88 (DFHE…NPRK). Residues 64 to 78 (DFHEMLGDRNTRRGS) are compositionally biased toward basic and acidic residues. Ca(2+) contacts are provided by D105, D107, N109, Q111, and D116. Substrate contacts are provided by residues R292, 299–300 (WD), N336, 345–347 (RSQ), E412, R461, and G464. Active-site proton donor/acceptor residues include D466 and E670.

The protein belongs to the glycosyl hydrolase 37 family. It depends on Ca(2+) as a cofactor.

The protein resides in the cytoplasm. The enzyme catalyses alpha,alpha-trehalose + H2O = alpha-D-glucose + beta-D-glucose. It functions in the pathway carbohydrate degradation. With respect to regulation, activated by calcium. Functionally, hydrolyzes intracellular trehalose to glucose. The disaccharide trehalose serves as a storage carbohydrate that is mobilized during conidial germination. Regulates the level of trehalose as a protectant for cell integrity during heat stress. The sequence is that of Cytosolic neutral trehalase from Emericella nidulans (strain FGSC A4 / ATCC 38163 / CBS 112.46 / NRRL 194 / M139) (Aspergillus nidulans).